We begin with the raw amino-acid sequence, 402 residues long: Phosphoglycerate kinase (402 aa).

Substrate contacts are provided by residues 24 to 26 (DLN), Arg-39, 62 to 65 (HLGR), Arg-121, and Arg-161. ATP is bound by residues Lys-211, Gly-299, Glu-330, and 359 to 362 (GGDS).

Belongs to the phosphoglycerate kinase family. In terms of assembly, monomer.

The protein localises to the cytoplasm. The enzyme catalyses (2R)-3-phosphoglycerate + ATP = (2R)-3-phospho-glyceroyl phosphate + ADP. Its pathway is carbohydrate degradation; glycolysis; pyruvate from D-glyceraldehyde 3-phosphate: step 2/5. The protein is Phosphoglycerate kinase of Mycolicibacterium gilvum (strain PYR-GCK) (Mycobacterium gilvum (strain PYR-GCK)).